A 92-amino-acid polypeptide reads, in one-letter code: Small ribosomal subunit protein uS19 (92 aa).

The tract at residues 72 to 92 (GEFSPTRSFRGHAGAKNKGKK) is disordered. Basic residues predominate over residues 80–92 (FRGHAGAKNKGKK).

It belongs to the universal ribosomal protein uS19 family.

Functionally, protein S19 forms a complex with S13 that binds strongly to the 16S ribosomal RNA. This is Small ribosomal subunit protein uS19 from Flavobacterium johnsoniae (strain ATCC 17061 / DSM 2064 / JCM 8514 / BCRC 14874 / CCUG 350202 / NBRC 14942 / NCIMB 11054 / UW101) (Cytophaga johnsonae).